We begin with the raw amino-acid sequence, 203 residues long: bMERB domain-containing protein 1 (203 aa).

The 147-residue stretch at L3–D149 folds into the bMERB domain. The tract at residues V161–A184 is disordered.

The sequence is that of bMERB domain-containing protein 1 (Bmerb1) from Mus musculus (Mouse).